We begin with the raw amino-acid sequence, 346 residues long: tRNA N6-adenosine threonylcarbamoyltransferase (346 aa).

Fe cation contacts are provided by His111 and His115. Residues 134–138 (LVSGG), Asp167, Gly180, and Asn279 each bind substrate. Asp307 lines the Fe cation pocket.

Belongs to the KAE1 / TsaD family. Requires Fe(2+) as cofactor.

The protein resides in the cytoplasm. It carries out the reaction L-threonylcarbamoyladenylate + adenosine(37) in tRNA = N(6)-L-threonylcarbamoyladenosine(37) in tRNA + AMP + H(+). Required for the formation of a threonylcarbamoyl group on adenosine at position 37 (t(6)A37) in tRNAs that read codons beginning with adenine. Is involved in the transfer of the threonylcarbamoyl moiety of threonylcarbamoyl-AMP (TC-AMP) to the N6 group of A37, together with TsaE and TsaB. TsaD likely plays a direct catalytic role in this reaction. This is tRNA N6-adenosine threonylcarbamoyltransferase from Burkholderia lata (strain ATCC 17760 / DSM 23089 / LMG 22485 / NCIMB 9086 / R18194 / 383).